A 108-amino-acid polypeptide reads, in one-letter code: Nucleoid-associated protein BH02310 (108 aa).

It belongs to the YbaB/EbfC family. As to quaternary structure, homodimer.

The protein resides in the cytoplasm. It is found in the nucleoid. Binds to DNA and alters its conformation. May be involved in regulation of gene expression, nucleoid organization and DNA protection. The sequence is that of Nucleoid-associated protein BH02310 from Bartonella henselae (strain ATCC 49882 / DSM 28221 / CCUG 30454 / Houston 1) (Rochalimaea henselae).